The following is a 477-amino-acid chain: Argininosuccinate lyase (477 aa).

It belongs to the lyase 1 family. Argininosuccinate lyase subfamily.

It localises to the cytoplasm. The enzyme catalyses 2-(N(omega)-L-arginino)succinate = fumarate + L-arginine. Its pathway is amino-acid biosynthesis; L-arginine biosynthesis; L-arginine from L-ornithine and carbamoyl phosphate: step 3/3. The polypeptide is Argininosuccinate lyase (Acinetobacter baumannii (strain ACICU)).